The following is a 419-amino-acid chain: AT-hook motif nuclear-localized protein 4 (419 aa).

3 disordered regions span residues 1–168 (MEER…SGGG), 301–337 (QQQQ…DPKA), and 382–419 (DLFS…EVPS). The short motif at 78–86 (KKKRGRPRK) is the Bipartite nuclear localization signal element. The a.T hook DNA-binding region spans 78-90 (KKKRGRPRKYNPD). Positions 101–112 (PISSSVPLTSEF) are enriched in polar residues. A compositionally biased stretch (basic residues) spans 115-130 (RKRGRGRGRGRGRGRG). A compositionally biased stretch (low complexity) spans 136 to 148 (GSREPNNNNNDNN). The PPC domain maps to 174-314 (VSPSFTPHVL…QQIKKQRRER (141 aa)). Residues 318–328 (PTTTQASNISF) show a composition bias toward polar residues. Residues 391–406 (DREEDEDDLEGEDDEE) show a composition bias toward acidic residues.

In terms of assembly, homodimer. Interacts with AHL3. In terms of tissue distribution, predominantly expressed in the stele of the root meristem with a specificity to the procambium.

The protein localises to the nucleus. Functionally, transcription factor that specifically binds AT-rich DNA sequences related to the nuclear matrix attachment regions (MARs). Acts redundantly with AHL3 to regulate the formation of tissue boundary between the xylem and procambium in the root meristem. Cell-to-cell movement of AHL4 from the procambium to the xylem is critical for its function in root vascular patterning. This Arabidopsis thaliana (Mouse-ear cress) protein is AT-hook motif nuclear-localized protein 4.